Reading from the N-terminus, the 288-residue chain is uncharacterized protein (288 aa).

This is an uncharacterized protein from Methanocaldococcus jannaschii (strain ATCC 43067 / DSM 2661 / JAL-1 / JCM 10045 / NBRC 100440) (Methanococcus jannaschii).